The following is a 571-amino-acid chain: Protein tesmin/TSO1-like CXC 6 (571 aa).

5 disordered regions span residues 1-52 (MGEG…AAAS), 92-119 (IRHP…QKKK), 293-325 (NQGT…GGNA), 370-411 (LANQ…RSLS), and 507-571 (NGVS…KKDL). A compositionally biased stretch (basic and acidic residues) spans 7–16 (GDKFPPKTDE). Residues 117–241 (KKKQCNCKHS…KCLDCKNFEG (125 aa)) form the CRC domain. Composition is skewed to polar residues over residues 293-319 (NQGT…QTGS), 373-388 (QKET…QGHV), and 508-539 (GVSQ…QTAK). The segment covering 540-557 (QPSQLTTTTTTPNTSSQT) has biased composition (low complexity).

This sequence belongs to the lin-54 family. As to expression, ubiquitous but expressed mostly in flowers.

The protein resides in the nucleus. In terms of biological role, plays a role in development of both male and female reproductive tissues. The sequence is that of Protein tesmin/TSO1-like CXC 6 (TCX6) from Arabidopsis thaliana (Mouse-ear cress).